A 386-amino-acid chain; its full sequence is ATP phosphoribosyltransferase regulatory subunit (386 aa).

The protein belongs to the class-II aminoacyl-tRNA synthetase family. HisZ subfamily. Heteromultimer composed of HisG and HisZ subunits.

The protein resides in the cytoplasm. It functions in the pathway amino-acid biosynthesis; L-histidine biosynthesis; L-histidine from 5-phospho-alpha-D-ribose 1-diphosphate: step 1/9. In terms of biological role, required for the first step of histidine biosynthesis. May allow the feedback regulation of ATP phosphoribosyltransferase activity by histidine. This is ATP phosphoribosyltransferase regulatory subunit from Ralstonia nicotianae (strain ATCC BAA-1114 / GMI1000) (Ralstonia solanacearum).